A 166-amino-acid polypeptide reads, in one-letter code: UPF0561 protein C2orf68 homolog (166 aa).

Residues 32–49 are compositionally biased toward basic and acidic residues; that stretch reads NQLDRDDYDKKVKQAAKE. The segment at 32-107 is disordered; the sequence is NQLDRDDYDK…SELEPPGRQL (76 aa). Residues 91-101 are compositionally biased toward low complexity; that stretch reads ESSSSGSSELE.

The protein belongs to the UPF0561 family.

The chain is UPF0561 protein C2orf68 homolog from Mus musculus (Mouse).